The primary structure comprises 288 residues: Probable ketoamine kinase VP1481 (288 aa).

92 to 94 (NYL) is a binding site for ATP. The active-site Proton acceptor is the D195.

This sequence belongs to the fructosamine kinase family.

In terms of biological role, ketoamine kinase that phosphorylates ketoamines on the third carbon of the sugar moiety to generate ketoamine 3-phosphate. This Vibrio parahaemolyticus serotype O3:K6 (strain RIMD 2210633) protein is Probable ketoamine kinase VP1481.